Consider the following 675-residue polypeptide: Sodium/myo-inositol cotransporter 2 (675 aa).

Residues 1–27 (MESGTSSPQPPQLDPLDAFPQKGLEPG) lie on the Extracellular side of the membrane. A helical membrane pass occupies residues 28–48 (DIAVLVLYFLFVLAVGLWSTV). Residues 49-65 (KTKRDTVKGYFLAGGDM) are Cytoplasmic-facing. The chain crosses the membrane as a helical span at residues 66-88 (VWWPVGASLFASNVGSGHFIGLA). The Extracellular portion of the chain corresponds to 89 to 102 (GSGAATGISVSAYE). Residues 103 to 123 (LNGLFSVLMLAWIFLPIYIAG) traverse the membrane as a helical segment. The Cytoplasmic portion of the chain corresponds to 124-135 (QVTTMPEYLRKR). A helical transmembrane segment spans residues 136–156 (FGGIRIPIILAVLYLFIYIFT). Over 157-180 (KISVDMYAGAIFIQQSLHLDLYLA) the chain is Extracellular. Residues 181-201 (IVGLLAITAVYTVAGGLAAVI) traverse the membrane as a helical segment. The Cytoplasmic portion of the chain corresponds to 202 to 208 (YTDALQT). The chain crosses the membrane as a helical span at residues 209–229 (LIMLIGALTLMGYSFAAVGGM). The Extracellular segment spans residues 230 to 272 (EGLKEKYFLALASNRSENSSCGLPREDAFHIFRDPLTSDLPWP). The chain crosses the membrane as a helical span at residues 273–293 (GVLFGMSIPSLWYWCTDQVIV). Residues 294–308 (QRTLAAKNLSHAKGG) lie on the Cytoplasmic side of the membrane. Residues 309–329 (ALMAAYLKVLPLFIMVFPGMV) traverse the membrane as a helical segment. At 330 to 375 (SRILFPDQVACADPEICQKICSNPSGCSDIAYPKLVLELLPTGLRG) the chain is on the extracellular side. A helical transmembrane segment spans residues 376–396 (LMMAVMVAALMSSLTSIFNSA). The Cytoplasmic segment spans residues 397 to 418 (STIFTMDLWNHLRPRASEKELM). Residues 419–439 (IVGRVFVLLLVLVSILWIPVV) form a helical membrane-spanning segment. At 440–446 (QASQGGQ) the chain is on the extracellular side. The chain crosses the membrane as a helical span at residues 447–467 (LFIYIQSISSYLQPPVAVVFI). Over 468 to 479 (MGCFWKRTNEKG) the chain is Cytoplasmic. Residues 480-500 (AFWGLISGLLLGLVRLVLDFI) form a helical membrane-spanning segment. Residues 501 to 521 (YVQPRCDQPDERPVLVKSIHY) are Extracellular-facing. Residues 522 to 542 (LYFSMILSTVTLITVSTVSWF) form a helical membrane-spanning segment. Residues 543 to 654 (TEPPSKEMVS…SLEENPLVKT (112 aa)) are Cytoplasmic-facing. Residues 655-675 (LLDVNLIFCVSCAIFIWGYFA) traverse the membrane as a helical segment.

This sequence belongs to the sodium:solute symporter (SSF) (TC 2.A.21) family. Highest expression in heart, skeletal muscle, kidney, liver and placenta. Weaker expression in brain, colon, spleen, lung and peripheral blood leukocytes.

The protein resides in the membrane. It localises to the apical cell membrane. It carries out the reaction myo-inositol(out) + 2 Na(+)(out) = myo-inositol(in) + 2 Na(+)(in). The enzyme catalyses 1D-chiro-inositol(out) + 2 Na(+)(out) = 1D-chiro-inositol(in) + 2 Na(+)(in). The catalysed reaction is D-glucose(out) + 2 Na(+)(out) = D-glucose(in) + 2 Na(+)(in). It catalyses the reaction D-xylose(out) + 2 Na(+)(out) = D-xylose(in) + 2 Na(+)(in). With respect to regulation, MI transport activity inhibited by D-chiro-inositol (DCI), phlorizin (Pz) and sodium (Na(+)). Insulin increases D-chiro-inositol uptake. Its function is as follows. Involved in the sodium-dependent cotransport of myo-inositol (MI) with a Na(+):MI stoichiometry of 2:1. Exclusively responsible for apical MI transport and absorption in intestine. Can also transport D-chiro-inositol (DCI) but not L-fucose. Exhibits stereospecific cotransport of both D-glucose and D-xylose. May induce apoptosis through the TNF-alpha, PDCD1 pathway. May play a role in the regulation of MI concentration in serum, involving reabsorption in at least the proximal tubule of the kidney. The sequence is that of Sodium/myo-inositol cotransporter 2 from Homo sapiens (Human).